The chain runs to 492 residues: Cysteine--tRNA ligase (492 aa).

Residue Cys27 participates in Zn(2+) binding. The short motif at 29-39 (VTVYDLCHLGH) is the 'HIGH' region element. Positions 211, 236, and 240 each coordinate Zn(2+). The 'KMSKS' region motif lies at 268-272 (KMSKS). Lys271 is a binding site for ATP.

This sequence belongs to the class-I aminoacyl-tRNA synthetase family. As to quaternary structure, monomer. Requires Zn(2+) as cofactor.

The protein resides in the cytoplasm. It carries out the reaction tRNA(Cys) + L-cysteine + ATP = L-cysteinyl-tRNA(Cys) + AMP + diphosphate. The protein is Cysteine--tRNA ligase of Prochlorococcus marinus (strain MIT 9515).